The chain runs to 365 residues: Quinolone epoxide rearrangement protein asqO (365 aa).

The protein belongs to the quinolone epoxide rearrangement protein penF family.

The catalysed reaction is (1'E,3'E)-5-(3,3-dimethyloxiran-2-yl)-3-methylhexa-1,3-dienyl-quinolinone B = aspoquinolone A. It catalyses the reaction (1'E,3'E)-5-(3,3-dimethyloxiran-2-yl)-3-methylhexa-1,3-dienyl-quinolinone B = aspoquinolone B. It functions in the pathway secondary metabolite biosynthesis. It participates in alkaloid biosynthesis. The protein operates within mycotoxin biosynthesis. In terms of biological role, quinolone epoxide rearrangement protein; part of the gene cluster that mediates the biosynthesis of the aspoquinolone mycotoxins. Within the pathway, asqO catalyzes an enzymatic 3-exo-tet cyclization to yield the cyclopropyl-THF ring system in aspoquinolone. The first step of the pathway is catalyzed by the nonribosomal peptide synthetase asqK that condenses anthranilic acid and O-methyl-L-tyrosine to produce 4'-methoxycyclopeptin. 4'-methoxycyclopeptin is then converted to 4'-methoxydehydrocyclopeptin by the ketoglutarate-dependent dioxygenase asqJ. AsqJ also converts its first product 4'-methoxydehydrocyclopeptin to 4'-methoxycyclopenin. The following conversion of 4'-methoxycyclopenin into 4'-methoxyviridicatin is catalyzed by the cyclopenase asqI. 4'-methoxyviridicatin is the precursor of quinolone natural products, and is further converted to quinolinone B. The prenyltransferase asqH1 then catalyzes the canonical Friedel-Crafts alkylation of quinolinone B with dimethylallyl cation to yield dimethylallyl quinolone, which is subjected to FAD-dependent dehydrogenation by the FAD-linked oxidoreductase asqF to yield conjugated aryl diene. The delta(3') double bond then serves as the site of the second alkylation with DMAPP catalyzed by the prenyltransferase asqH2 to yield a carbenium ion intermediate, which can be attacked by H(2)O to yield a styrenyl quinolone containing a C3'-hydroxyprenyl chain. The FAD-dependent monooxygenase asqG performs epoxidation of the terminal C7'-C8' olefin. Finally, after dehydratation of the epoxide at C3 by asqC, the quinolone epoxide rearrangement protein asqO catalyzes an enzymatic 3-exo-tet cyclization to yield the cyclopropyl-THF ring system in aspoquinolone. The chain is Quinolone epoxide rearrangement protein asqO from Emericella nidulans (strain FGSC A4 / ATCC 38163 / CBS 112.46 / NRRL 194 / M139) (Aspergillus nidulans).